Consider the following 342-residue polypeptide: Arrestin domain-containing protein 5 (342 aa).

The protein belongs to the arrestin family. Testis-enriched.

Its subcellular location is the membrane. Its function is as follows. Plays an essential role in spermatogenesis. May be involved in the anchoring of the sperm head to the tail during spermatogenesis by affecting SEC22A-mediated SUN5 and NDC1 transport and localization. In Homo sapiens (Human), this protein is Arrestin domain-containing protein 5 (ARRDC5).